The chain runs to 129 residues: Small ribosomal subunit protein uS11 (129 aa).

Belongs to the universal ribosomal protein uS11 family. Part of the 30S ribosomal subunit. Interacts with proteins S7 and S18. Binds to IF-3.

Its function is as follows. Located on the platform of the 30S subunit, it bridges several disparate RNA helices of the 16S rRNA. Forms part of the Shine-Dalgarno cleft in the 70S ribosome. In Lactobacillus gasseri (strain ATCC 33323 / DSM 20243 / BCRC 14619 / CIP 102991 / JCM 1131 / KCTC 3163 / NCIMB 11718 / NCTC 13722 / AM63), this protein is Small ribosomal subunit protein uS11.